The following is a 190-amino-acid chain: Putative CRISPR system CMR subunit Cmr7 2 (190 aa).

It belongs to the CRISPR system Cmr7 family. In terms of assembly, homodimer.

Its function is as follows. CRISPR (clustered regularly interspaced short palindromic repeat) is an adaptive immune system that provides protection against mobile genetic elements (viruses, transposable elements and conjugative plasmids). CRISPR clusters contain spacers, sequences complementary to antecedent mobile elements, and target invading nucleic acids. CRISPR clusters are transcribed and processed into CRISPR RNA (crRNA). The polypeptide is Putative CRISPR system CMR subunit Cmr7 2 (cmr7b) (Saccharolobus solfataricus (strain ATCC 35092 / DSM 1617 / JCM 11322 / P2) (Sulfolobus solfataricus)).